Consider the following 135-residue polypeptide: Protein PsiE homolog (135 aa).

4 helical membrane-spanning segments follow: residues 20–40 (VGLL…TIHL), 54–74 (YLLI…ALIV), 82–102 (HFPL…LIIV), and 107–127 (PIDT…LYLA).

This sequence belongs to the PsiE family.

It localises to the cell inner membrane. The protein is Protein PsiE homolog of Serratia proteamaculans (strain 568).